The chain runs to 323 residues: Putative gluconeogenesis factor (323 aa).

Belongs to the gluconeogenesis factor family.

The protein resides in the cytoplasm. Its function is as follows. Required for morphogenesis under gluconeogenic growth conditions. This chain is Putative gluconeogenesis factor, found in Thermoanaerobacterium thermosulfurigenes (Clostridium thermosulfurogenes).